Consider the following 82-residue polypeptide: Small ribosomal subunit protein bS16 (82 aa).

Belongs to the bacterial ribosomal protein bS16 family.

The chain is Small ribosomal subunit protein bS16 from Aeromonas hydrophila subsp. hydrophila (strain ATCC 7966 / DSM 30187 / BCRC 13018 / CCUG 14551 / JCM 1027 / KCTC 2358 / NCIMB 9240 / NCTC 8049).